Consider the following 379-residue polypeptide: Sperm microtubule associated protein 2 (379 aa).

The disordered stretch occupies residues 1–82 (MGDSRRRSLG…EFPETLDPKE (82 aa)). Basic and acidic residues-rich tracts occupy residues 19-29 (GRSEREQDGDP) and 38-50 (ESRRVTDPERQDL). Positions 56-76 (GPEDPEEELPPEEVAGEEFPE) are enriched in acidic residues. 6 THEG repeats span residues 118 to 137 (KARKRRRRRRLMELAEPKIN), 184 to 203 (TITVPAVSRRVEELSRPKRF), 222 to 241 (SSLEYRASSRLKELAAPKIR), 258 to 277 (AAQMAVPSSRILQLSKPKAP), 290 to 309 (PKPHVSDHNRLLHLARPKAQ), and 326 to 345 (VTKKVVASPRIISLAKPKVR). Serine 295 carries the phosphoserine modification. The segment at 344–379 (VRKGLNEGYDRRPLASMSLPPPKASPEKCDQPRPGL) is disordered. Composition is skewed to basic and acidic residues over residues 347–356 (GLNEGYDRRP) and 368–379 (SPEKCDQPRPGL).

Interacts with CCT5. As to expression, testis specific.

Its subcellular location is the nucleus. Functionally, may be involved (but not essential) in spermatogenesis. In Homo sapiens (Human), this protein is Sperm microtubule associated protein 2.